The sequence spans 160 residues: Putative pre-16S rRNA nuclease (160 aa).

It belongs to the YqgF nuclease family.

The protein localises to the cytoplasm. Functionally, could be a nuclease involved in processing of the 5'-end of pre-16S rRNA. The polypeptide is Putative pre-16S rRNA nuclease (Rhodopseudomonas palustris (strain BisB5)).